A 475-amino-acid chain; its full sequence is UDP-N-acetylmuramate--L-alanine ligase (475 aa).

125-131 (GTHGKTT) contributes to the ATP binding site.

This sequence belongs to the MurCDEF family.

It localises to the cytoplasm. It carries out the reaction UDP-N-acetyl-alpha-D-muramate + L-alanine + ATP = UDP-N-acetyl-alpha-D-muramoyl-L-alanine + ADP + phosphate + H(+). Its pathway is cell wall biogenesis; peptidoglycan biosynthesis. Its function is as follows. Cell wall formation. This Actinobacillus pleuropneumoniae serotype 7 (strain AP76) protein is UDP-N-acetylmuramate--L-alanine ligase.